The following is a 91-amino-acid chain: Small ribosomal subunit protein uS19 (91 aa).

The segment at 1 to 32 (MPRSIKKGPFIDEHLDRKVQSAQASNSRRPIK) is disordered. The segment covering 9–19 (PFIDEHLDRKV) has biased composition (basic and acidic residues).

The protein belongs to the universal ribosomal protein uS19 family.

Its function is as follows. Protein S19 forms a complex with S13 that binds strongly to the 16S ribosomal RNA. This Acidithiobacillus ferrooxidans (strain ATCC 53993 / BNL-5-31) (Leptospirillum ferrooxidans (ATCC 53993)) protein is Small ribosomal subunit protein uS19.